Here is a 226-residue protein sequence, read N- to C-terminus: ATP synthase subunit a (226 aa).

6 helical membrane passes run 17–37, 79–99, 105–125, 134–154, 176–196, and 199–219; these read FSYF…AMMA, LVAT…IPGF, SLNL…FEGI, FAHF…IEIV, LFLM…AYVL, and FMAF…LAGA.

It belongs to the ATPase A chain family. As to quaternary structure, F-type ATPases have 2 components, CF(1) - the catalytic core - and CF(0) - the membrane proton channel. CF(1) has five subunits: alpha(3), beta(3), gamma(1), delta(1), epsilon(1). CF(0) has three main subunits: a(1), b(2) and c(9-12). The alpha and beta chains form an alternating ring which encloses part of the gamma chain. CF(1) is attached to CF(0) by a central stalk formed by the gamma and epsilon chains, while a peripheral stalk is formed by the delta and b chains.

The protein resides in the cell inner membrane. In terms of biological role, key component of the proton channel; it plays a direct role in the translocation of protons across the membrane. This chain is ATP synthase subunit a, found in Campylobacter jejuni subsp. jejuni serotype O:6 (strain 81116 / NCTC 11828).